The chain runs to 166 residues: 2S seed storage protein 4 (166 aa).

Residues 1–21 (MANKLFLVCAALALCFILTNA) form the signal peptide. 2 propeptides span residues 22–37 (SVYR…DASN) and 73–88 (GPSL…DIEN).

The protein belongs to the 2S seed storage albumins family. The mature protein consists of a small and a large chain linked by disulfide bonds.

In terms of biological role, this is a 2S seed storage protein. The sequence is that of 2S seed storage protein 4 (AT2S4) from Arabidopsis thaliana (Mouse-ear cress).